We begin with the raw amino-acid sequence, 215 residues long: Small ribosomal subunit protein uS7 (215 aa).

It belongs to the universal ribosomal protein uS7 family. As to quaternary structure, part of the 30S ribosomal subunit.

One of the primary rRNA binding proteins, it binds directly to 16S rRNA where it nucleates assembly of the head domain of the 30S subunit. Is located at the subunit interface close to the decoding center. The protein is Small ribosomal subunit protein uS7 of Pyrococcus abyssi (strain GE5 / Orsay).